The chain runs to 323 residues: Ribosomal protein L11 methyltransferase (323 aa).

T160, G184, D206, and N257 together coordinate S-adenosyl-L-methionine.

The protein belongs to the methyltransferase superfamily. PrmA family.

The protein localises to the cytoplasm. The catalysed reaction is L-lysyl-[protein] + 3 S-adenosyl-L-methionine = N(6),N(6),N(6)-trimethyl-L-lysyl-[protein] + 3 S-adenosyl-L-homocysteine + 3 H(+). Methylates ribosomal protein L11. The protein is Ribosomal protein L11 methyltransferase of Agathobacter rectalis (strain ATCC 33656 / DSM 3377 / JCM 17463 / KCTC 5835 / VPI 0990) (Eubacterium rectale).